Consider the following 304-residue polypeptide: Mas-related G-protein coupled receptor member A1 (304 aa).

Residues 1–17 (MDNTIPGGINITILIPN) are Extracellular-facing. N10 is a glycosylation site (N-linked (GlcNAc...) asparagine). The helical transmembrane segment at 18-38 (LMIIIFGLVGLTGNGIVFWLL) threads the bilayer. Residues 39-53 (GFCLHRNAFSVYILN) are Cytoplasmic-facing. The helical transmembrane segment at 54-74 (LALADFFFLLGHIIDSILLLL) threads the bilayer. N75 is a topological domain (extracellular). Residues 76-96 (VFYPITFLLCFYTIMMVLYIA) traverse the membrane as a helical segment. The Cytoplasmic segment spans residues 97–131 (GLSMLSAISTERCLSVLCPIWYHCHRPEHTSTVMC). A helical membrane pass occupies residues 132–152 (AVIWVLSLLICILNSYFCGFL). At 153 to 166 (NTQYKNENGCLALN) the chain is on the extracellular side. The chain crosses the membrane as a helical span at residues 167–187 (FFTAAYLMFLFVVLCLSSLAL). The Cytoplasmic segment spans residues 188 to 206 (VARLFCGTGQIKLTRLYVT). A helical transmembrane segment spans residues 207–227 (IILSILVFLLCGLPFGIHWFL). Residues 228–243 (LFKIKDDFHVFDLGFY) lie on the Extracellular side of the membrane. A helical transmembrane segment spans residues 244-264 (LASVVLTAINSCANPIIYFFV). The Cytoplasmic segment spans residues 265–304 (GSFRHRLKHQTLKMVLQNALQDTPETAKIMVEMSRSKSEP).

Belongs to the G-protein coupled receptor 1 family. Mas subfamily. As to expression, expressed in a subset of sensory neurons that includes nociceptors. Expressed in the subclass of non-peptidergic sensory neurons that are IB4(+) and VR1(-).

Its subcellular location is the cell membrane. Its function is as follows. Orphan receptor activated by a subset of RFamide-family neuropeptides such as FLRF-amide and FMRF-amide. Mediates its action by association with G proteins that activate a phosphatidylinositol-calcium second messenger system. Its effect is mediated by G(q) and G(11) proteins. May regulate the function of nociceptive neurons by modulation of pain perception. The sequence is that of Mas-related G-protein coupled receptor member A1 (Mrgpra1) from Mus musculus (Mouse).